The sequence spans 86 residues: Photosystem I reaction center subunit PsaK (86 aa).

A helical transmembrane segment spans residues 15 to 34; it reads PWSTQVAMVMITCNLLAIVA.

It belongs to the PsaG/PsaK family.

It localises to the plastid. Its subcellular location is the chloroplast thylakoid membrane. The sequence is that of Photosystem I reaction center subunit PsaK from Pyropia yezoensis (Susabi-nori).